A 238-amino-acid chain; its full sequence is Adenylate dimethylallyltransferase (238 aa).

Belongs to the isopentenyl transferase family.

The catalysed reaction is dimethylallyl diphosphate + AMP = N(6)-(dimethylallyl)adenosine 5'-phosphate + diphosphate. Functionally, transfers dimethylallyl groups to AMP as part of the biosynthesis of cytokinin phytohormones. In Ralstonia nicotianae (strain ATCC BAA-1114 / GMI1000) (Ralstonia solanacearum), this protein is Adenylate dimethylallyltransferase (tzs).